Here is a 516-residue protein sequence, read N- to C-terminus: uncharacterized protein (516 aa).

At S21 the chain carries Phosphoserine. Residues 46-74 are disordered; that stretch reads DLQSSMEDSNKANGNGEETTDGAEGVLQT. The span at 47-62 shows a compositional bias: polar residues; that stretch reads LQSSMEDSNKANGNGE. WD repeat units lie at residues 182-227, 252-292, 295-335, 337-377, 381-421, and 426-468; these read TFPL…AVYP, YHTD…CVKS, YHSD…APSS, QVTS…KSVW, AHDG…PKMV, and LDVG…GVRK. Residues 482-493 show a composition bias toward basic and acidic residues; the sequence is ERIVQLEDRGAG. Positions 482–516 are disordered; sequence ERIVQLEDRGAGEDSSDDDDYEDIEDDDDQDAEMS. The span at 495–516 shows a compositional bias: acidic residues; sequence DSSDDDDYEDIEDDDDQDAEMS. A phosphoserine mark is found at S496 and S497.

Its subcellular location is the cytoplasm. It is found in the nucleus. The protein resides in the nucleolus. This is an uncharacterized protein from Schizosaccharomyces pombe (strain 972 / ATCC 24843) (Fission yeast).